A 259-amino-acid polypeptide reads, in one-letter code: Envelope biogenesis factor ElyC (259 aa).

2 helical membrane passes run 12–32 and 39–59; these read MLLP…LLWF and GKIF…QPVA.

It is found in the cell inner membrane. In terms of biological role, plays a critical role in the metabolism of the essential lipid carrier used for cell wall synthesis. In Escherichia coli O157:H7, this protein is Envelope biogenesis factor ElyC (elyC).